Consider the following 567-residue polypeptide: uncharacterized protein (567 aa).

Residues 1 to 26 (MPSEKATTRHLPGAVETLSPRTGRRP) form a disordered region. The next 6 membrane-spanning stretches (helical) occupy residues 57–77 (AILVTNVIGLIVGAMLLTVAF), 90–110 (VSFGIVPGYCVLAFILGTYWL), 142–162 (VALAVLFLWGAAAALWTIIYG), 173–193 (LFSMGVIGVVAATSCYLLTEF), 221–241 (MLVWLLCSGVPNVGVALTAIF), and 257–277 (VLILWAPLLIFGFILMWILAW). Positions 278-329 (LTATPVRVVREALNRVEQGDLSGDLVVFDGTELGELQRGFNRMVEGLRERER) constitute an HAMP domain. A Guanylate cyclase domain is found at 361–485 (AVVFVDIVGS…EPVNEAARLC (125 aa)).

This sequence belongs to the adenylyl cyclase class-3 family.

The protein resides in the cell membrane. This is an uncharacterized protein from Mycobacterium tuberculosis (strain ATCC 25618 / H37Rv).